A 117-amino-acid polypeptide reads, in one-letter code: Aspartate 1-decarboxylase (117 aa).

Serine 25 serves as the catalytic Schiff-base intermediate with substrate; via pyruvic acid. Serine 25 carries the post-translational modification Pyruvic acid (Ser). Position 57 (threonine 57) interacts with substrate. Tyrosine 58 functions as the Proton donor in the catalytic mechanism. 73–75 is a binding site for substrate; that stretch reads GAA.

The protein belongs to the PanD family. As to quaternary structure, heterooctamer of four alpha and four beta subunits. Pyruvate serves as cofactor. Post-translationally, is synthesized initially as an inactive proenzyme, which is activated by self-cleavage at a specific serine bond to produce a beta-subunit with a hydroxyl group at its C-terminus and an alpha-subunit with a pyruvoyl group at its N-terminus.

The protein localises to the cytoplasm. The catalysed reaction is L-aspartate + H(+) = beta-alanine + CO2. It participates in cofactor biosynthesis; (R)-pantothenate biosynthesis; beta-alanine from L-aspartate: step 1/1. In terms of biological role, catalyzes the pyruvoyl-dependent decarboxylation of aspartate to produce beta-alanine. The chain is Aspartate 1-decarboxylase from Thermoanaerobacter pseudethanolicus (strain ATCC 33223 / 39E) (Clostridium thermohydrosulfuricum).